Reading from the N-terminus, the 225-residue chain is ATP synthase subunit a (225 aa).

Transmembrane regions (helical) follow at residues 16–36 (LFVY…VAKL), 79–99 (LVAT…IPGF), 105–125 (SLNL…FEGI), 176–196 (LFLL…AYAL), and 202–222 (VLQT…AVAI).

This sequence belongs to the ATPase A chain family. In terms of assembly, F-type ATPases have 2 components, CF(1) - the catalytic core - and CF(0) - the membrane proton channel. CF(1) has five subunits: alpha(3), beta(3), gamma(1), delta(1), epsilon(1). CF(0) has three main subunits: a(1), b(2) and c(9-12). The alpha and beta chains form an alternating ring which encloses part of the gamma chain. CF(1) is attached to CF(0) by a central stalk formed by the gamma and epsilon chains, while a peripheral stalk is formed by the delta and b chains.

It localises to the cell inner membrane. Its function is as follows. Key component of the proton channel; it plays a direct role in the translocation of protons across the membrane. The protein is ATP synthase subunit a of Campylobacter curvus (strain 525.92).